A 191-amino-acid polypeptide reads, in one-letter code: Large ribosomal subunit protein uL6A (191 aa).

It belongs to the universal ribosomal protein uL6 family. Component of the large ribosomal subunit (LSU). Mature yeast ribosomes consist of a small (40S) and a large (60S) subunit. The 40S small subunit contains 1 molecule of ribosomal RNA (18S rRNA) and 33 different proteins (encoded by 57 genes). The large 60S subunit contains 3 rRNA molecules (25S, 5.8S and 5S rRNA) and 46 different proteins (encoded by 81 genes). uL6 lines the binding pocket for eukaryotic elongation factor 2 (eEF2).

Its subcellular location is the cytoplasm. In terms of biological role, component of the ribosome, a large ribonucleoprotein complex responsible for the synthesis of proteins in the cell. The small ribosomal subunit (SSU) binds messenger RNAs (mRNAs) and translates the encoded message by selecting cognate aminoacyl-transfer RNA (tRNA) molecules. The large subunit (LSU) contains the ribosomal catalytic site termed the peptidyl transferase center (PTC), which catalyzes the formation of peptide bonds, thereby polymerizing the amino acids delivered by tRNAs into a polypeptide chain. The nascent polypeptides leave the ribosome through a tunnel in the LSU and interact with protein factors that function in enzymatic processing, targeting, and the membrane insertion of nascent chains at the exit of the ribosomal tunnel. The polypeptide is Large ribosomal subunit protein uL6A (Saccharomyces cerevisiae (strain ATCC 204508 / S288c) (Baker's yeast)).